A 192-amino-acid polypeptide reads, in one-letter code: Inner membrane protein YohD (192 aa).

At 1 to 40 the chain is on the periplasmic side; it reads MDLNTLISQYGYAALVIGSLAEGETVTLLGGVAAHQGLLK. A helical transmembrane segment spans residues 41–61; that stretch reads FPLVVLSVALGGMIGDQVLYL. The Cytoplasmic segment spans residues 62–121; it reads CGRRFGGKLLRRFSKHQDKIERAQKLIQRHPYLFVIGTRFMYGFRVIGPTLIGASQLPPK. A helical transmembrane segment spans residues 122–142; it reads IFLPLNILGAFAWALIFTTIG. Residues 143 to 159 lie on the Periplasmic side of the membrane; that stretch reads YAGGQVIAPWLHNLDQH. The chain crosses the membrane as a helical span at residues 160–180; that stretch reads LKHWVWLILVVVLVVGVRWWL. Residues 181 to 192 are Cytoplasmic-facing; sequence KRRGKKKPDHQA.

The protein belongs to the DedA family.

It localises to the cell inner membrane. This is Inner membrane protein YohD (yohD) from Escherichia coli (strain K12).